Consider the following 465-residue polypeptide: Glutamate--tRNA ligase 1 (465 aa).

Residues 8-18 (PSPTGNLHIGG) carry the 'HIGH' region motif. The 'KMSKS' region motif lies at 236 to 240 (KLSKR). Residue lysine 239 coordinates ATP.

This sequence belongs to the class-I aminoacyl-tRNA synthetase family. Glutamate--tRNA ligase type 1 subfamily. In terms of assembly, monomer.

Its subcellular location is the cytoplasm. It carries out the reaction tRNA(Glu) + L-glutamate + ATP = L-glutamyl-tRNA(Glu) + AMP + diphosphate. Functionally, catalyzes the attachment of glutamate to tRNA(Glu) in a two-step reaction: glutamate is first activated by ATP to form Glu-AMP and then transferred to the acceptor end of tRNA(Glu). The polypeptide is Glutamate--tRNA ligase 1 (Wolinella succinogenes (strain ATCC 29543 / DSM 1740 / CCUG 13145 / JCM 31913 / LMG 7466 / NCTC 11488 / FDC 602W) (Vibrio succinogenes)).